Reading from the N-terminus, the 1377-residue chain is Zinc finger MYM-type protein 2 (1377 aa).

Glycyl lysine isopeptide (Lys-Gly) (interchain with G-Cter in SUMO2) cross-links involve residues Lys48, Lys88, Lys98, and Lys104. Polar residues-rich tracts occupy residues Thr85–Glu115 and Thr127–Phe138. Residues Thr85–Glu177 are disordered. The span at Ile139 to Asp152 shows a compositional bias: basic and acidic residues. A Glycyl lysine isopeptide (Lys-Gly) (interchain with G-Cter in SUMO2) cross-link involves residue Lys147. Residues Val153–Lys164 show a composition bias toward polar residues. Ser159 is subject to Phosphoserine. Residues Lys253 and Lys297 each participate in a glycyl lysine isopeptide (Lys-Gly) (interchain with G-Cter in SUMO2) cross-link. The segment at Asn273–Ser305 is disordered. A compositionally biased stretch (polar residues) spans Ser284–Gln298. Ser305 is modified (phosphoserine). Residues Lys312, Lys325, Lys348, and Lys366 each participate in a glycyl lysine isopeptide (Lys-Gly) (interchain with G-Cter in SUMO2) cross-link. The segment at Val327–Phe363 adopts an MYM-type 1 zinc-finger fold. The MYM-type 2 zinc-finger motif lies at Pro369–Tyr409. Residues Lys417, Lys441, Lys491, Lys503, Lys513, Lys529, and Lys532 each participate in a glycyl lysine isopeptide (Lys-Gly) (interchain with G-Cter in SUMO2) cross-link. 2 consecutive MYM-type zinc fingers follow at residues Asn421–Tyr456 and Ile463–Tyr502. The MYM-type 5 zinc-finger motif lies at Leu533–His570. Glycyl lysine isopeptide (Lys-Gly) (interchain with G-Cter in SUMO2) cross-links involve residues Lys576, Lys603, Lys649, Lys658, Lys688, Lys700, and Lys709. Residues Gln636–Tyr671 form an MYM-type 6 zinc finger. 2 consecutive MYM-type zinc fingers follow at residues Arg723–Phe758 and Lys764–Phe799. Glycyl lysine isopeptide (Lys-Gly) (interchain with G-Cter in SUMO2) cross-links involve residues Lys764, Lys788, Lys812, and Lys829. 2 positions are modified to phosphoserine: Ser838 and Ser958. Disordered regions lie at residues Leu983–Pro1002 and Val1028–Ser1064. Residues Pro1039–Ala1050 show a composition bias toward basic residues. Residue Ser1064 is modified to Phosphoserine. Phosphothreonine is present on Thr1376.

In terms of assembly, may be a component of a BHC histone deacetylase complex that contains HDAC1, HDAC2, HMG20B/BRAF35, KDM1A, RCOR1/CoREST, PHF21A/BHC80, ZNF198, ZNF217, ZMYM3, GSE1 and GTF2I.

Its subcellular location is the nucleus. In terms of biological role, may function as a transcription factor. In Pongo abelii (Sumatran orangutan), this protein is Zinc finger MYM-type protein 2 (ZMYM2).